The sequence spans 353 residues: Mitochondrial import inner membrane translocase subunit TIM50 (353 aa).

The transit peptide at 1–21 directs the protein to the mitochondrion; sequence MAASAALFSRLRSGLRVGARG. Topologically, residues 22–65 are mitochondrial matrix; sequence LCTRLAPPPPRTPEQVTEIANRGGSKAQGPQHQPGSEGPSYAKK. Residues 24–59 form a disordered region; sequence TRLAPPPPRTPEQVTEIANRGGSKAQGPQHQPGSEG. Residues 66–86 form a helical membrane-spanning segment; that stretch reads IALWIAGLLGAGGTVSIVYIF. Residues 87–353 are Mitochondrial intermembrane-facing; sequence GNNPVDENGT…SRLWPRSKQP (267 aa). An FCP1 homology domain is found at 143–286; that stretch reads YYQPPYTLVL…LDLSAFLKTI (144 aa). A Phosphoserine modification is found at Ser341.

The protein belongs to the TIM50 family. In terms of assembly, component of the TIM23 complex at least composed of TIMM23, TIMM17 (TIMM17A or TIMM17B) and TIMM50; within this complex, directly interacts with TIMM23. The complex interacts with the TIMM44 component of the PAM complex and with DNAJC15.

The protein resides in the mitochondrion inner membrane. Functionally, essential component of the TIM23 complex, a complex that mediates the translocation of transit peptide-containing proteins across the mitochondrial inner membrane. Has some phosphatase activity in vitro; however such activity may not be relevant in vivo. This is Mitochondrial import inner membrane translocase subunit TIM50 (Timm50) from Mus musculus (Mouse).